The sequence spans 787 residues: Dolichyl-diphosphooligosaccharide--protein glycosyltransferase subunit STT3A (787 aa).

Topologically, residues 1–18 are cytoplasmic; it reads MAEPESSTAAAGGSRLRN. The chain crosses the membrane as a helical span at residues 19-39; sequence ACGGVLCAFTLLLIGVLAFSI. The Lumenal portion of the chain corresponds to 40 to 125; it reads RLFSVIKYES…LSVETVCVFT (86 aa). Residues 53–55 carry the DXD motif 1 motif; that stretch reads EFD. Mn(2+) is bound at residue aspartate 55. Residues 126–144 form a helical membrane-spanning segment; sequence APIFSANASWATYLLTKEA. Residues 145–146 are Cytoplasmic-facing; it reads KG. Residues 147 to 164 form a helical membrane-spanning segment; it reads TGAGLMAAAILAMVPSYI. The Lumenal segment spans residues 165–175; sequence SRSVAGSYDNE. Mn(2+) is bound by residues aspartate 173 and glutamate 175. Positions 173-175 match the DXD motif 2 motif; it reads DNE. Residues 176–195 traverse the membrane as a helical segment; that stretch reads AVAIFALIFTFYLYVKTLNT. The Cytoplasmic portion of the chain corresponds to 196 to 197; it reads GS. A helical membrane pass occupies residues 198 to 212; it reads LFYATLNALSYFYMV. The Lumenal segment spans residues 213 to 217; the sequence is CSWGG. Residues 218-234 form a helical membrane-spanning segment; sequence YTFIINLIPIHVLLCIV. Over 235-239 the chain is Cytoplasmic; the sequence is TGRYS. Residues 240–265 form a helical membrane-spanning segment; sequence SRLYIAYAPLVILGTLLAALVPVVGF. Residues 266–273 lie on the Lumenal side of the membrane; it reads NAVMTSEH. Residues 274 to 293 traverse the membrane as a helical segment; that stretch reads FASFLVFIILHVVALVYYIK. Residues 294 to 306 lie on the Cytoplasmic side of the membrane; sequence GLLTPRLFKVAMT. Residues 307–327 traverse the membrane as a helical segment; it reads LVITVGLAVCFAVIAILIALV. Topologically, residues 328–365 are lumenal; the sequence is ASSPTKGWSGRSLSLLDPTYASKYIPIIASVSEHQPPT. Positions 357 to 360 match the SVSE motif motif; that stretch reads SVSE. The chain crosses the membrane as a helical span at residues 366 to 388; the sequence is WPSYFMDINVLAFLIPAGIISCF. Over 389 to 394 the chain is Cytoplasmic; that stretch reads LPLSDA. The helical transmembrane segment at 395 to 411 threads the bilayer; it reads SSFVVLYLVTAVYFSGV. The Lumenal portion of the chain corresponds to 412 to 415; the sequence is MVRL. Residue arginine 414 coordinates dolichyl diphosphooligosaccharide. A helical membrane pass occupies residues 416 to 437; the sequence is MLVLAPAACILSGIALSEAFDV. Residues 438-525 lie on the Cytoplasmic side of the membrane; that stretch reads LTRSVKYQLS…KLLVLPMEAS (88 aa). Positions 453 to 475 are enriched in low complexity; sequence SPAASGDSSAESSSASTVSTNSA. The tract at residues 453–507 is disordered; it reads SPAASGDSSAESSSASTVSTNSAKNETRPEKTETAPKEKPSKKNRKKEKEVAESV. A compositionally biased stretch (basic and acidic residues) spans 477–504; sequence NETRPEKTETAPKEKPSKKNRKKEKEVA. A helical membrane pass occupies residues 526-546; it reads VLGILLLIVLGGFYVVHCVWA. The Lumenal segment spans residues 547–787; that stretch reads AAEAYSAPSI…AAGRKKNPWQ (241 aa). Residues 592–594 form an interacts with target acceptor peptide in protein substrate region; sequence WWD. Residues 592–596 carry the WWDYG motif motif; that stretch reads WWDYG. Tyrosine 597 serves as a coordination point for dolichyl diphosphooligosaccharide. N-linked (GlcNAc...) asparagine glycans are attached at residues asparagine 604 and asparagine 611. Asparagine 615 carries N-linked (GlcNAc...) (high mannose) asparagine glycosylation. The DK motif signature appears at 659–666; sequence DINKFLWM. Residues 759 to 769 are compositionally biased toward basic residues; the sequence is RVRGKLKKLKS. The disordered stretch occupies residues 759 to 787; it reads RVRGKLKKLKSGSKASSTNAAGRKKNPWQ.

This sequence belongs to the STT3 family. As to quaternary structure, component of the oligosaccharyltransferase (OST) complex. Requires Mg(2+) as cofactor. It depends on Mn(2+) as a cofactor.

It is found in the endoplasmic reticulum membrane. The enzyme catalyses a di-trans,poly-cis-dolichyl diphosphooligosaccharide + L-asparaginyl-[protein] = N(4)-(oligosaccharide-(1-&gt;4)-N-acetyl-beta-D-glucosaminyl-(1-&gt;4)-N-acetyl-beta-D-glucosaminyl)-L-asparaginyl-[protein] + a di-trans,poly-cis-dolichyl diphosphate + H(+). It participates in protein modification; protein glycosylation. In terms of biological role, catalytic subunit of the oligosaccharyl transferase (OST) complex that catalyzes the initial transfer of a defined glycan (Glc(3)Man(9)GlcNAc(2) in eukaryotes) from the lipid carrier dolichol-pyrophosphate to an asparagine residue within an Asn-X-Ser/Thr consensus motif in nascent polypeptide chains, the first step in protein N-glycosylation. N-glycosylation occurs cotranslationally and the complex associates with the Sec61 complex at the channel-forming translocon complex that mediates protein translocation across the endoplasmic reticulum (ER). All subunits are required for a maximal enzyme activity. This subunit contains the active site and the acceptor peptide and donor lipid-linked oligosaccharide (LLO) binding pockets. The chain is Dolichyl-diphosphooligosaccharide--protein glycosyltransferase subunit STT3A (STT3A) from Oryza sativa subsp. japonica (Rice).